The chain runs to 504 residues: uncharacterized protein (504 aa).

Disordered stretches follow at residues 1 to 59 (MSSS…KNEY) and 171 to 255 (GVNS…NQRL). Composition is skewed to basic and acidic residues over residues 36-50 (KPID…KEIG) and 199-212 (RAET…ESRQ). Positions 213–232 (SNRGNNDNGDQRMTSKATTR) are enriched in polar residues.

This is an uncharacterized protein from Caenorhabditis elegans.